The chain runs to 331 residues: MNTILNQIYLGHSLTESETYKLFKLIMTGKINDIQLSSILTAINIRGESENEIIGAVRACLKYSKSFPKQNYMFSDIVGTGGDSSNSINISTASAFVGATCGLKIVKHCNTSISSMTGSCDLLKEFNIDLHASCEKSQNMLNKLNICFLFAPKYHANFKYISLVRKTLKIRTLFNILGPLINPSKPPLSLVGVYSTKLMVPMANVLKKLNSYHAIVVHSDHTDEVTLHDSTNVTELKNNNIISYTLCPDDFGVKYYNKNAILGGTPKENYEIIKYVLKGKGPHAISETIAVNVALLLKLYGNENLKKNTKCALKIIQSGKVYEKIIALSKF.

Residues Gly79, 82-83 (GD), Ser87, 89-92 (NIST), 107-115 (KHCNTSISS), and Ser119 each bind 5-phospho-alpha-D-ribose 1-diphosphate. Gly79 serves as a coordination point for anthranilate. Ser91 contributes to the Mg(2+) binding site. Asn110 is an anthranilate binding site. Arg165 serves as a coordination point for anthranilate. Mg(2+) is bound by residues Asp223 and Glu224.

It belongs to the anthranilate phosphoribosyltransferase family. Homodimer. Requires Mg(2+) as cofactor.

The enzyme catalyses N-(5-phospho-beta-D-ribosyl)anthranilate + diphosphate = 5-phospho-alpha-D-ribose 1-diphosphate + anthranilate. Its pathway is amino-acid biosynthesis; L-tryptophan biosynthesis; L-tryptophan from chorismate: step 2/5. Catalyzes the transfer of the phosphoribosyl group of 5-phosphorylribose-1-pyrophosphate (PRPP) to anthranilate to yield N-(5'-phosphoribosyl)-anthranilate (PRA). This is Anthranilate phosphoribosyltransferase from Buchnera aphidicola subsp. Schlechtendalia chinensis.